A 459-amino-acid polypeptide reads, in one-letter code: Probable rhamnogalacturonase C (459 aa).

An N-terminal signal peptide occupies residues 1–18 (MRASILPLTLFLATLAGA). Residues N36, N64, N77, N140, and N155 are each glycosylated (N-linked (GlcNAc...) asparagine). Cysteines 39 and 65 form a disulfide. The active-site Proton donor is the D216. A disulfide bridge links C218 with C235. N236 and N251 each carry an N-linked (GlcNAc...) asparagine glycan. The active site involves H290. Residue N315 is glycosylated (N-linked (GlcNAc...) asparagine). An intrachain disulfide couples C337 to C343. Residue N356 is glycosylated (N-linked (GlcNAc...) asparagine). C365 and C374 form a disulfide bridge.

Belongs to the glycosyl hydrolase 28 family.

The protein resides in the secreted. In terms of biological role, pectinolytic enzymes consist of four classes of enzymes: pectine lyase, polygalacturonase, pectin methylesterase and rhamnogalacturonase. Hydrolyzes alpha-D-galacturonopyranosyl-(1,2)-alpha-L-rhamnopyranosyl linkages in the backbone of the hairy regions of pectins. The chain is Probable rhamnogalacturonase C (rhgC) from Aspergillus niger (strain ATCC MYA-4892 / CBS 513.88 / FGSC A1513).